Consider the following 174-residue polypeptide: Crossover junction endodeoxyribonuclease RuvC (174 aa).

Residues Asp-8, Glu-67, and Asp-139 contribute to the active site. Mg(2+)-binding residues include Asp-8, Glu-67, and Asp-139.

The protein belongs to the RuvC family. In terms of assembly, homodimer which binds Holliday junction (HJ) DNA. The HJ becomes 2-fold symmetrical on binding to RuvC with unstacked arms; it has a different conformation from HJ DNA in complex with RuvA. In the full resolvosome a probable DNA-RuvA(4)-RuvB(12)-RuvC(2) complex forms which resolves the HJ. The cofactor is Mg(2+).

Its subcellular location is the cytoplasm. The enzyme catalyses Endonucleolytic cleavage at a junction such as a reciprocal single-stranded crossover between two homologous DNA duplexes (Holliday junction).. In terms of biological role, the RuvA-RuvB-RuvC complex processes Holliday junction (HJ) DNA during genetic recombination and DNA repair. Endonuclease that resolves HJ intermediates. Cleaves cruciform DNA by making single-stranded nicks across the HJ at symmetrical positions within the homologous arms, yielding a 5'-phosphate and a 3'-hydroxyl group; requires a central core of homology in the junction. The consensus cleavage sequence is 5'-(A/T)TT(C/G)-3'. Cleavage occurs on the 3'-side of the TT dinucleotide at the point of strand exchange. HJ branch migration catalyzed by RuvA-RuvB allows RuvC to scan DNA until it finds its consensus sequence, where it cleaves and resolves the cruciform DNA. This Stutzerimonas stutzeri (strain A1501) (Pseudomonas stutzeri) protein is Crossover junction endodeoxyribonuclease RuvC.